The following is a 206-amino-acid chain: Small ribosomal subunit protein uS4 (206 aa).

In terms of domain architecture, S4 RNA-binding spans 96-156 (SRLDNVVYRM…EKSKKQLRIQ (61 aa)).

This sequence belongs to the universal ribosomal protein uS4 family. As to quaternary structure, part of the 30S ribosomal subunit. Contacts protein S5. The interaction surface between S4 and S5 is involved in control of translational fidelity.

In terms of biological role, one of the primary rRNA binding proteins, it binds directly to 16S rRNA where it nucleates assembly of the body of the 30S subunit. Functionally, with S5 and S12 plays an important role in translational accuracy. In Francisella philomiragia subsp. philomiragia (strain ATCC 25017 / CCUG 19701 / FSC 153 / O#319-036), this protein is Small ribosomal subunit protein uS4.